Reading from the N-terminus, the 127-residue chain is MADLAKIVEDLSSLTVLEAAELSKLLEEKWGVSAAAPVAVAAAGGAAGGAAAAAEEEKTEFDVILTDAGANKINVIKEVRAITGLGLKEAKDLVEGAPKAVKEAVSKAEAADLKKKLEDAGAKVDVK.

It belongs to the bacterial ribosomal protein bL12 family. In terms of assembly, homodimer. Part of the ribosomal stalk of the 50S ribosomal subunit. Forms a multimeric L10(L12)X complex, where L10 forms an elongated spine to which 2 to 4 L12 dimers bind in a sequential fashion. Binds GTP-bound translation factors.

Its function is as follows. Forms part of the ribosomal stalk which helps the ribosome interact with GTP-bound translation factors. Is thus essential for accurate translation. The polypeptide is Large ribosomal subunit protein bL12 (Sinorhizobium fredii (strain NBRC 101917 / NGR234)).